We begin with the raw amino-acid sequence, 251 residues long: MAYIKIALLAAIAALASAQTQEEIDELNVILNDVKSNLQEYISLAEDSSSGFSLSSLPSGVLDIGLALASATDDSYTTLYSEVDFAAVSKMLTMVPWYSSRLLPELESLLGTSTTAASSTEASSAATSSAVASSSETTSSAVASSSEATSSAVASSSEASSSAATSSAVASSSEATSSTVASSTKAASSTKASSSAVSSAVASSTKASAISQISDGQVQATSTVSEQTENGAAKAVIGMGAGVMAAAAMLL.

The N-terminal stretch at 1 to 18 (MAYIKIALLAAIAALASA) is a signal peptide. A PIR1/2/3 repeat occupies 207–225 (ASAISQISDGQVQATSTVS). Gly-231 carries the GPI-anchor amidated glycine lipid modification. The propeptide at 232 to 251 (AAKAVIGMGAGVMAAAAMLL) is removed in mature form.

This sequence belongs to the SRP1/TIP1 family. The GPI-anchor is attached to the protein in the endoplasmic reticulum and serves to target the protein to the cell surface. There, the glucosamine-inositol phospholipid moiety is cleaved off and the GPI-modified mannoprotein is covalently attached via its lipidless GPI glycan remnant to the 1,6-beta-glucan of the outer cell wall layer. In terms of processing, covalently linked to beta-1,3-glucan of the inner cell wall layer via an alkali-sensitive ester linkage between the gamma-carboxyl group of glutamic acids, arising from a specific glutamine within the PIR1/2/3 repeat, and hydroxyl groups of glucoses of beta-1,3-glucan chains.

It localises to the secreted. The protein resides in the cell wall. The protein localises to the membrane. Component of the cell wall. In Saccharomyces cerevisiae (strain ATCC 204508 / S288c) (Baker's yeast), this protein is Cold shock-induced protein TIR2 (TIR2).